Consider the following 50-residue polypeptide: MPITDPELVAIFEKRVLNKKVCRRCGALNPMSATKCRRCRSKNLRPKKKK.

This sequence belongs to the eukaryotic ribosomal protein eL40 family.

The sequence is that of Large ribosomal subunit protein eL40 from Aeropyrum pernix (strain ATCC 700893 / DSM 11879 / JCM 9820 / NBRC 100138 / K1).